Consider the following 1150-residue polypeptide: Alpha-mannosidase 2 (1150 aa).

Over 1-5 (MKLSR) the chain is Cytoplasmic. Residues 6 to 26 (QFTVFGSAIFCVVIFSLYLML) form a helical; Signal-anchor for type II membrane protein membrane-spanning segment. Topologically, residues 27–1150 (DRGHLDYPRG…STFRIRLRWT (1124 aa)) are lumenal. N-linked (GlcNAc...) asparagine glycosylation is present at Asn78. 2 positions are modified to phosphoserine: Ser80 and Ser82. A glycan (N-linked (GlcNAc...) asparagine) is linked at Asn93. Zn(2+) contacts are provided by His174, Asp176, Asp288, and His568. Asp288 functions as the Nucleophile in the catalytic mechanism. N-linked (GlcNAc...) asparagine glycosylation is present at Asn1129.

It belongs to the glycosyl hydrolase 38 family. In terms of assembly, homodimer; disulfide-linked. The cofactor is Zn(2+). Post-translationally, glycosylated. All tissues, mostly in adrenal and thymus.

Its subcellular location is the golgi apparatus membrane. The catalysed reaction is N(4)-{beta-D-GlcNAc-(1-&gt;2)-alpha-D-Man-(1-&gt;3)-[alpha-D-Man-(1-&gt;3)-[alpha-D-Man-(1-&gt;6)]-alpha-D-Man-(1-&gt;6)]-beta-D-Man-(1-&gt;4)-beta-D-GlcNAc-(1-&gt;4)-beta-D-GlcNAc}-L-asparaginyl-[protein] + 2 H2O = 2 alpha-D-mannopyranose + an N(4)-{beta-D-GlcNAc-(1-&gt;2)-alpha-D-Man-(1-&gt;3)-[alpha-D-Man-(1-&gt;6)]-beta-D-Man-(1-&gt;4)-beta-D-GlcNAc-(1-&gt;4)-beta-D-GlcNAc}-L-asparaginyl-[protein]. Its pathway is protein modification; protein glycosylation. In terms of biological role, catalyzes the first committed step in the biosynthesis of complex N-glycans. It controls conversion of high mannose to complex N-glycans; the final hydrolytic step in the N-glycan maturation pathway. This Mus musculus (Mouse) protein is Alpha-mannosidase 2 (Man2a1).